A 327-amino-acid polypeptide reads, in one-letter code: Opticin (327 aa).

Residues 1-19 form the signal peptide; it reads MKLPAFLSLLALVLLEAGT. A sulfotyrosine mark is found at Tyr-61 and Tyr-67. The region spanning 111–148 is the LRRNT domain; that stretch reads VLGSPNSHGLPTCLICVCLGSSVYCDDADLENIPPLPK. LRR repeat units lie at residues 149–170, 173–194, 197–218, 219–237, 243–263, 264–285, and 295–315; these read TTTYLYARFNRIRRIRAGDFKG, KLKRIDLSSNSISSIDDDALRL, ALQDLILPENQLAALPALPPAI, EVLDARHNQLQSSGIQPEA, KLQFLYLADNLLDSIPGPLPP, SLRSLHLQNNLIETMQTDAFCD, and WLEDIRLDGNPINLGLFPSAY. Cys-284 and Cys-317 are joined by a disulfide.

The protein belongs to the small leucine-rich proteoglycan (SLRP) family. SLRP class III subfamily. Homodimer. O-glycosylated. Post-translationally, proteolytically cleaved by MMP1, MMP2, MMP3, MMP7, MMP8, MMP9, ADAMTS4, and ADAMTS5. Proteolytically cleaved by MMP13. In terms of processing, sulfated on tyrosine residues. As to expression, ocular tissues, cartilage, ligament, skin, muscle and testes.

Its subcellular location is the secreted. It is found in the extracellular space. The protein resides in the extracellular matrix. Functionally, inhibits angiogenesis in the vitreous humor of the eye, and therefore represses neovascularization. Binds collagen fibrils. May be involved in collagen fiber organization via regulation of other members of the small leucine-rich repeat proteoglycan superfamily. This chain is Opticin (OPTC), found in Canis lupus familiaris (Dog).